The primary structure comprises 178 residues: Large ribosomal subunit protein uL6 (178 aa).

The protein belongs to the universal ribosomal protein uL6 family. Part of the 50S ribosomal subunit.

In terms of biological role, this protein binds to the 23S rRNA, and is important in its secondary structure. It is located near the subunit interface in the base of the L7/L12 stalk, and near the tRNA binding site of the peptidyltransferase center. In Campylobacter lari (strain RM2100 / D67 / ATCC BAA-1060), this protein is Large ribosomal subunit protein uL6.